The primary structure comprises 337 residues: Putative 4-hydroxythreonine-4-phosphate dehydrogenase 2 (337 aa).

3 residues coordinate a divalent metal cation: histidine 173, histidine 217, and histidine 274.

The protein belongs to the PdxA family. In terms of assembly, homodimer. The cofactor is Zn(2+). Mg(2+) is required as a cofactor. Requires Co(2+) as cofactor.

It localises to the cytoplasm. It carries out the reaction 4-(phosphooxy)-L-threonine + NAD(+) = 3-amino-2-oxopropyl phosphate + CO2 + NADH. It functions in the pathway cofactor biosynthesis; pyridoxine 5'-phosphate biosynthesis; pyridoxine 5'-phosphate from D-erythrose 4-phosphate: step 4/5. In terms of biological role, catalyzes the NAD(P)-dependent oxidation of 4-(phosphooxy)-L-threonine (HTP) into 2-amino-3-oxo-4-(phosphooxy)butyric acid which spontaneously decarboxylates to form 3-amino-2-oxopropyl phosphate (AHAP). In Pseudomonas aeruginosa (strain ATCC 15692 / DSM 22644 / CIP 104116 / JCM 14847 / LMG 12228 / 1C / PRS 101 / PAO1), this protein is Putative 4-hydroxythreonine-4-phosphate dehydrogenase 2.